The primary structure comprises 172 residues: Protein GrpE (172 aa).

Positions Met-1–Lys-24 are disordered.

It belongs to the GrpE family. As to quaternary structure, homodimer.

The protein resides in the cytoplasm. In terms of biological role, participates actively in the response to hyperosmotic and heat shock by preventing the aggregation of stress-denatured proteins, in association with DnaK and GrpE. It is the nucleotide exchange factor for DnaK and may function as a thermosensor. Unfolded proteins bind initially to DnaJ; upon interaction with the DnaJ-bound protein, DnaK hydrolyzes its bound ATP, resulting in the formation of a stable complex. GrpE releases ADP from DnaK; ATP binding to DnaK triggers the release of the substrate protein, thus completing the reaction cycle. Several rounds of ATP-dependent interactions between DnaJ, DnaK and GrpE are required for fully efficient folding. This is Protein GrpE from Xanthomonas oryzae pv. oryzae (strain PXO99A).